Here is a 390-residue protein sequence, read N- to C-terminus: MNDFSAWAEIDLDAVAHNVAALKALTRPACRLMAAVKADGYGHGMCEVASVALESGASALGVSRIDEALDLRNHGITAPILVLGHTPAHRCREMVDQNLIQTVCALAEAQALSRAATAIGATVSVHLKVDTGMGRLGINTVVPGRTAPQEAAVKEALAVLDLPGLAAEGVFTHFACADSADKTHANAQFKRFSTLIQELEAAGRPVAVRHAANSAALIDMPETHLDMVRAGIAIYGLYPSAEVDRQKVALKPAMAFKTRVAQVKKVPAGFTVSYGATYTTPKPTVLAVVSVGYADGLNRLLSSRGFMLVRGCRVPLVGRICMDLTMLDVGGVPDVAVGDEVVIFGSQNGAFIGADEIADALNTISYEVVTSITGRVPRVYCNGSSSAVRR.

The active-site Proton acceptor; specific for D-alanine is lysine 37. Lysine 37 is subject to N6-(pyridoxal phosphate)lysine. Arginine 135 provides a ligand contact to substrate. Tyrosine 274 (proton acceptor; specific for L-alanine) is an active-site residue. Methionine 322 is a substrate binding site.

Belongs to the alanine racemase family. Requires pyridoxal 5'-phosphate as cofactor.

The catalysed reaction is L-alanine = D-alanine. Its pathway is amino-acid biosynthesis; D-alanine biosynthesis; D-alanine from L-alanine: step 1/1. Its function is as follows. Catalyzes the interconversion of L-alanine and D-alanine. May also act on other amino acids. In Desulfosudis oleivorans (strain DSM 6200 / JCM 39069 / Hxd3) (Desulfococcus oleovorans), this protein is Alanine racemase (alr).